Consider the following 116-residue polypeptide: Large ribosomal subunit protein bL20 (116 aa).

It belongs to the bacterial ribosomal protein bL20 family.

Functionally, binds directly to 23S ribosomal RNA and is necessary for the in vitro assembly process of the 50S ribosomal subunit. It is not involved in the protein synthesizing functions of that subunit. The sequence is that of Large ribosomal subunit protein bL20 from Nautilia profundicola (strain ATCC BAA-1463 / DSM 18972 / AmH).